The chain runs to 168 residues: Small ribosomal subunit protein uS5 (168 aa).

Residues 14-77 (FEERVVSINR…EAAKKNLITV (64 aa)) enclose the S5 DRBM domain.

The protein belongs to the universal ribosomal protein uS5 family. Part of the 30S ribosomal subunit. Contacts proteins S4 and S8.

With S4 and S12 plays an important role in translational accuracy. In terms of biological role, located at the back of the 30S subunit body where it stabilizes the conformation of the head with respect to the body. The chain is Small ribosomal subunit protein uS5 from Lactococcus lactis subsp. cremoris (strain MG1363).